The chain runs to 247 residues: 2,3-bisphosphoglycerate-dependent phosphoglycerate mutase (247 aa).

Substrate-binding positions include 8–15, 21–22, Arg-60, 87–90, Lys-98, 114–115, and 183–184; these read RHGESQWN, TG, ERHY, RR, and GN. The active-site Tele-phosphohistidine intermediate is His-9. Catalysis depends on Glu-87, which acts as the Proton donor/acceptor.

Belongs to the phosphoglycerate mutase family. BPG-dependent PGAM subfamily.

It catalyses the reaction (2R)-2-phosphoglycerate = (2R)-3-phosphoglycerate. Its pathway is carbohydrate degradation; glycolysis; pyruvate from D-glyceraldehyde 3-phosphate: step 3/5. Catalyzes the interconversion of 2-phosphoglycerate and 3-phosphoglycerate. This is 2,3-bisphosphoglycerate-dependent phosphoglycerate mutase from Chlorobium phaeobacteroides (strain DSM 266 / SMG 266 / 2430).